The following is a 625-amino-acid chain: Archaeosine synthase subunit alpha (625 aa).

The PUA domain maps to 556–624 (KYVVKIDDFV…VAVDVRHVKK (69 aa)).

This sequence belongs to the archaeosine synthase type 1 family. Forms a robust complex with the archaeosine synthase beta subunit RaSEA. Formation of this complex highly increases lysine transfer activity. The complex likely consists of an alpha(2)beta(2) heterotetrameric structure.

It carries out the reaction 7-cyano-7-carbaguanosine(15) in tRNA + L-lysine = 7-N-[(5S)-5-amino-5-carboxypentyl]formamidino-7-deazaguanosine(15) in tRNA. The protein operates within tRNA modification; archaeosine-tRNA biosynthesis. In terms of biological role, functions in the biosynthesis of archaeosine, a modified nucleoside present in the dihydrouridine loop (D-loop) of archaeal tRNAs. Catalyzes the addition of L-lysine to the cyano group of 7-cyano-7-deazaguanine (preQ0)-modified tRNAs at position 15, to generate q0kN15-tRNA, a q0N lysine adduct identified as 7-N-[(5S)-5-amino-5-carboxypentyl]formamidino-7-deazaguanosine. This chain is Archaeosine synthase subunit alpha, found in Methanosarcina acetivorans (strain ATCC 35395 / DSM 2834 / JCM 12185 / C2A).